A 226-amino-acid chain; its full sequence is Uridylate kinase (226 aa).

Residue 6-10 (KISGK) coordinates ATP. Gly43 contributes to the UMP binding site. Residues Gly44 and Arg48 each contribute to the ATP site. UMP is bound by residues Asp65 and 113–119 (FQPGQST). Residues Thr139, Asn140, Tyr145, and Asp148 each coordinate ATP.

Belongs to the UMP kinase family. In terms of assembly, homohexamer.

It is found in the cytoplasm. The enzyme catalyses UMP + ATP = UDP + ADP. It participates in pyrimidine metabolism; CTP biosynthesis via de novo pathway; UDP from UMP (UMPK route): step 1/1. Its activity is regulated as follows. Inhibited by UTP. Functionally, catalyzes the reversible phosphorylation of UMP to UDP. This Saccharolobus islandicus (strain M.16.27) (Sulfolobus islandicus) protein is Uridylate kinase.